The chain runs to 200 residues: Holliday junction branch migration complex subunit RuvA (200 aa).

The segment at 1–63 is domain I; sequence MIASVRGVVT…EDSLTLYGFA (63 aa). Residues 64–142 are domain II; the sequence is DDNAKALFEL…PVPVGGDGAA (79 aa). The flexible linker stretch occupies residues 143–151; it reads GVTTGAWPE. The domain III stretch occupies residues 151 to 200; it reads EQVRQALVGLGWTAGQAEQAVAAVAETVDGEVPPVPVLLRQAIRLLGRTR.

It belongs to the RuvA family. As to quaternary structure, homotetramer. Forms an RuvA(8)-RuvB(12)-Holliday junction (HJ) complex. HJ DNA is sandwiched between 2 RuvA tetramers; dsDNA enters through RuvA and exits via RuvB. An RuvB hexamer assembles on each DNA strand where it exits the tetramer. Each RuvB hexamer is contacted by two RuvA subunits (via domain III) on 2 adjacent RuvB subunits; this complex drives branch migration. In the full resolvosome a probable DNA-RuvA(4)-RuvB(12)-RuvC(2) complex forms which resolves the HJ.

It is found in the cytoplasm. The RuvA-RuvB-RuvC complex processes Holliday junction (HJ) DNA during genetic recombination and DNA repair, while the RuvA-RuvB complex plays an important role in the rescue of blocked DNA replication forks via replication fork reversal (RFR). RuvA specifically binds to HJ cruciform DNA, conferring on it an open structure. The RuvB hexamer acts as an ATP-dependent pump, pulling dsDNA into and through the RuvAB complex. HJ branch migration allows RuvC to scan DNA until it finds its consensus sequence, where it cleaves and resolves the cruciform DNA. This Salinispora arenicola (strain CNS-205) protein is Holliday junction branch migration complex subunit RuvA.